The chain runs to 558 residues: Acid-sensing ion channel 4-B (558 aa).

The Cytoplasmic portion of the chain corresponds to 1 to 71 (MPIEFVCKIK…TSERLGFRQT (71 aa)). Residues 72 to 92 (LWGLALLVSLGLFLYQATWSA) form a helical membrane-spanning segment. Residues 93 to 433 (ATYLERPHLA…ETIEQKKAYD (341 aa)) are Extracellular-facing. 2 disulfides stabilise this stretch: C120–C204 and C182–C189. Residues N140, N183, N188, N210, and N245 are each glycosylated (N-linked (GlcNAc...) asparagine). 5 cysteine pairs are disulfide-bonded: C298–C373, C317–C369, C321–C367, C330–C351, and C332–C344. N-linked (GlcNAc...) asparagine glycosylation occurs at N374. The chain crosses the membrane as a helical span at residues 434–454 (IAGLLGDIGGQMGLFIGASIL). The GAS motif; ion selectivity filter signature appears at 450-452 (GAS). Over 455–558 (TILEILDYIY…QQAVQQDFAC (104 aa)) the chain is Cytoplasmic.

This sequence belongs to the amiloride-sensitive sodium channel (TC 1.A.6) family. ASIC4 subfamily. As to quaternary structure, homotrimer. Heterotrimer; with other ASIC proteins producing functional channels. As to expression, expressed in central nervous system.

Its subcellular location is the cell membrane. It carries out the reaction Na(+)(in) = Na(+)(out). In terms of biological role, does not exhibit measurable stand-alone pH-gated sodium channel activity but may form pH-gated heterotrimeric sodium channels. This chain is Acid-sensing ion channel 4-B, found in Danio rerio (Zebrafish).